Consider the following 660-residue polypeptide: MSAPESSISPVPPPGSSSGGGKKLDSLPKEDLVKFAKKQVAHVAEMKKNQTALMEKLKAKMSELEQVKKDAENLKLINEKLTTESAKKVENNPTECTECLSKSGALIELEKEVFEWKEKATRADMISLELRDLESKVDQLNRALRDKTEALIKAQEVITENDLEVNNMKKEKNNTKSSIEKLTEENTRLTKALQDEKIKSADFEARLRSAECRIVELSDQQGNEKLGLARKMAESENRGRILEEAVDVLKSENEKLLAKNEEFSAKLVSSEKEFAEFKKKSHFVLEKKGKQEDETRKAIEKLEKSKVTITELEQQADQTRQEHFKTVEDLASSRDKAERLEKTLKVLKSELTESEKAHTTAIDELQSSSSKLIQRLDEELRLMRSSRDTAEQKIKDIEIAKEKVDHLLQNERQRSENENGSLKSKLSSATKQIHSLEKELQELRNDFETRRIQSNQHQQQKAIAAVVPQPIQLPEHPIPPLHYQRPAVAPSDSVSCYDEPTQPDRSLEDVLYGDLGDEYRVESDELSEEKFKVILDQLENLKKTNHHVAELLSDAETANGRLTTQNSLLKDEIRRLEREEKREAELSNEKNMEYLKNVFVQFLKPESVPAERDQLVIVLQRVLHLSPKEVEILKAASAHMATAQAGSWSSYFSGWSGAAT.

Residues 1–28 (MSAPESSISPVPPPGSSSGGGKKLDSLP) are disordered. 3 coiled-coil regions span residues 30–92 (EDLV…VENN), 115–464 (EWKE…KAIA), and 517–596 (DEYR…EYLK). A GRIP domain is found at 585–636 (ELSNEKNMEYLKNVFVQFLKPESVPAERDQLVIVLQRVLHLSPKEVEILKAA).

The sequence is that of GRIP and coiled-coil domain-containing protein 2 from Caenorhabditis elegans.